The chain runs to 458 residues: ATP synthase subunit beta (458 aa).

148–155 (GGAGVGKT) contacts ATP.

It belongs to the ATPase alpha/beta chains family. F-type ATPases have 2 components, CF(1) - the catalytic core - and CF(0) - the membrane proton channel. CF(1) has five subunits: alpha(3), beta(3), gamma(1), delta(1), epsilon(1). CF(0) has three main subunits: a(1), b(2) and c(9-12). The alpha and beta chains form an alternating ring which encloses part of the gamma chain. CF(1) is attached to CF(0) by a central stalk formed by the gamma and epsilon chains, while a peripheral stalk is formed by the delta and b chains.

The protein localises to the cell inner membrane. It carries out the reaction ATP + H2O + 4 H(+)(in) = ADP + phosphate + 5 H(+)(out). Produces ATP from ADP in the presence of a proton gradient across the membrane. The catalytic sites are hosted primarily by the beta subunits. In Pseudomonas fluorescens (strain Pf0-1), this protein is ATP synthase subunit beta.